The following is a 333-amino-acid chain: Mitochondrial 2-oxoglutarate/malate carrier protein (333 aa).

3 Solcar repeats span residues F29 to R127, P136 to F227, and D236 to A325. 6 helical membrane-spanning segments follow: residues R30–L61, G102–I120, F138–A159, G202–Y221, H241–V259, and G300–L319.

This sequence belongs to the mitochondrial carrier (TC 2.A.29) family. As to quaternary structure, interacts with SMIM26.

It localises to the membrane. It carries out the reaction (S)-malate(in) + 2-oxoglutarate(out) = (S)-malate(out) + 2-oxoglutarate(in). The enzyme catalyses malonate(in) + 2-oxoglutarate(out) = malonate(out) + 2-oxoglutarate(in). The catalysed reaction is succinate(in) + 2-oxoglutarate(out) = succinate(out) + 2-oxoglutarate(in). It catalyses the reaction maleate(in) + 2-oxoglutarate(out) = maleate(out) + 2-oxoglutarate(in). It carries out the reaction oxaloacetate(in) + 2-oxoglutarate(out) = oxaloacetate(out) + 2-oxoglutarate(in). Functionally, catalyzes the transport of 2-oxoglutarate (alpha-oxoglutarate) across the inner mitochondrial membrane in an electroneutral exchange for malate. Can also exchange 2-oxoglutarate for other dicarboxylic acids such as malonate, succinate, maleate and oxaloacetate, although with lower affinity. Contributes to several metabolic processes, including the malate-aspartate shuttle, the oxoglutarate/isocitrate shuttle, in gluconeogenesis from lactate, and in nitrogen metabolism. Maintains mitochondrial fusion and fission events, and the organization and morphology of cristae. Involved in the regulation of apoptosis. Helps protect from cytotoxic-induced apoptosis by modulating glutathione levels in mitochondria. This chain is Mitochondrial 2-oxoglutarate/malate carrier protein (SLC25A11), found in Sus scrofa (Pig).